A 464-amino-acid polypeptide reads, in one-letter code: MSTAALVEGKIVQCIGAVIDVEFPRDSMPKIYDALILDGSELTLEVQQQLGDGVVRTICLGASDGLRRGLTVKNTAKPISVPVGKPTLGRIMDVLGRPIDEAGPIDSDVTRSIHQKAPAFDELSPSTELLETGIKVIDLICPFAKGGKVGLFGGAGVGKTVNMMELINNIAKEHGGYSVFAGVGERTREGNDFYHEMKDSNVLDKVALVYGQMNEPPGNRLRVALTGLTMAEHFRDEGLDVLFFVDNIYRFTLAGTEVSALLGRMPSAVGYQPTLAEEMGKLQERITSTKKGSITSVQAVYVPADDLTDPSPATTFGHLDATVVLSRDIASLGIYPAVDPLDSTSRQIDPNVIGEEHYSITRRVQQTLQRYKELRDIIAILGMDELSPEDKLSVARARKIQRFLSQPFHVAEVFTGSPGKYVPLKETIRGFKMIVDGECDHLPEQAFYMVGTIDEAFEKAKKIQ.

153–160 (GGAGVGKT) is an ATP binding site.

The protein belongs to the ATPase alpha/beta chains family. F-type ATPases have 2 components, CF(1) - the catalytic core - and CF(0) - the membrane proton channel. CF(1) has five subunits: alpha(3), beta(3), gamma(1), delta(1), epsilon(1). CF(0) has three main subunits: a(1), b(2) and c(9-12). The alpha and beta chains form an alternating ring which encloses part of the gamma chain. CF(1) is attached to CF(0) by a central stalk formed by the gamma and epsilon chains, while a peripheral stalk is formed by the delta and b chains.

The protein resides in the cell inner membrane. It carries out the reaction ATP + H2O + 4 H(+)(in) = ADP + phosphate + 5 H(+)(out). In terms of biological role, produces ATP from ADP in the presence of a proton gradient across the membrane. The catalytic sites are hosted primarily by the beta subunits. This Burkholderia cenocepacia (strain ATCC BAA-245 / DSM 16553 / LMG 16656 / NCTC 13227 / J2315 / CF5610) (Burkholderia cepacia (strain J2315)) protein is ATP synthase subunit beta.